The following is a 206-amino-acid chain: Small ribosomal subunit protein uS4 (206 aa).

The tract at residues 28-52 (YLDRRPYAPGQHGQRRGRGRPSDYS) is disordered. The S4 RNA-binding domain occupies 96-171 (RRLDNVVFRM…QKRRRVSPWI (76 aa)).

It belongs to the universal ribosomal protein uS4 family. As to quaternary structure, part of the 30S ribosomal subunit. Contacts protein S5. The interaction surface between S4 and S5 is involved in control of translational fidelity.

Its function is as follows. One of the primary rRNA binding proteins, it binds directly to 16S rRNA where it nucleates assembly of the body of the 30S subunit. In terms of biological role, with S5 and S12 plays an important role in translational accuracy. The protein is Small ribosomal subunit protein uS4 of Deinococcus geothermalis (strain DSM 11300 / CIP 105573 / AG-3a).